We begin with the raw amino-acid sequence, 75 residues long: Exodeoxyribonuclease 7 small subunit (75 aa).

Belongs to the XseB family. As to quaternary structure, heterooligomer composed of large and small subunits.

The protein localises to the cytoplasm. The enzyme catalyses Exonucleolytic cleavage in either 5'- to 3'- or 3'- to 5'-direction to yield nucleoside 5'-phosphates.. Functionally, bidirectionally degrades single-stranded DNA into large acid-insoluble oligonucleotides, which are then degraded further into small acid-soluble oligonucleotides. The protein is Exodeoxyribonuclease 7 small subunit of Chlamydia pneumoniae (Chlamydophila pneumoniae).